The chain runs to 368 residues: DNA replication and repair protein RecF (368 aa).

30-37 provides a ligand contact to ATP; the sequence is GKNGSGKT.

Belongs to the RecF family.

The protein localises to the cytoplasm. In terms of biological role, the RecF protein is involved in DNA metabolism; it is required for DNA replication and normal SOS inducibility. RecF binds preferentially to single-stranded, linear DNA. It also seems to bind ATP. This Marinomonas sp. (strain MWYL1) protein is DNA replication and repair protein RecF.